The chain runs to 96 residues: Large ribosomal subunit protein uL23 (96 aa).

The protein belongs to the universal ribosomal protein uL23 family. In terms of assembly, part of the 50S ribosomal subunit. Contacts protein L29, and trigger factor when it is bound to the ribosome.

Its function is as follows. One of the early assembly proteins it binds 23S rRNA. One of the proteins that surrounds the polypeptide exit tunnel on the outside of the ribosome. Forms the main docking site for trigger factor binding to the ribosome. This is Large ribosomal subunit protein uL23 from Caldicellulosiruptor saccharolyticus (strain ATCC 43494 / DSM 8903 / Tp8T 6331).